Consider the following 340-residue polypeptide: Proline-rich transmembrane protein 2 (340 aa).

Residues 1-261 (MAASSSEISE…AGPGVEGGEG (261 aa)) are disordered. At 1–268 (MAASSSEISE…GEGTQKPRDY (268 aa)) the chain is on the cytoplasmic side. At serine 28 the chain carries Phosphoserine. At threonine 74 the chain carries Phosphothreonine. Pro residues-rich tracts occupy residues 131–155 (PPEP…PKPA) and 197–207 (APEPHSPPSKK). Position 238 is a phosphoserine (serine 238). Arginine 240 is subject to Omega-N-methylarginine. A phosphoserine mark is found at serine 248 and serine 249. Positions 269-289 (IILAILSCFCPMWPVNIVAFA) form an intramembrane region, helical. Residues 290 to 317 (YAVMSRNSLQQGDVDGAQRLGRVAKLLS) lie on the Cytoplasmic side of the membrane. A helical transmembrane segment spans residues 318–338 (IVALVGGVLIIIASCVINLGV). Topologically, residues 339–340 (YK) are extracellular.

The protein belongs to the CD225/Dispanin family. As to quaternary structure, component of the outer core of AMPAR complex. AMPAR complex consists of an inner core made of 4 pore-forming GluA/GRIA proteins (GRIA1, GRIA2, GRIA3 and GRIA4) and 4 major auxiliary subunits arranged in a twofold symmetry. One of the two pairs of distinct binding sites is occupied either by CNIH2, CNIH3 or CACNG2, CACNG3. The other harbors CACNG2, CACNG3, CACNG4, CACNG8 or GSG1L. This inner core of AMPAR complex is complemented by outer core constituents binding directly to the GluA/GRIA proteins at sites distinct from the interaction sites of the inner core constituents. Outer core constituents include at least PRRT1, PRRT2, CKAMP44/SHISA9, FRRS1L and NRN1. The proteins of the inner and outer core serve as a platform for other, more peripherally associated AMPAR constituents. Alone or in combination, these auxiliary subunits control the gating and pharmacology of the AMPAR complex and profoundly impact their biogenesis and protein processing. Interacts with intersectin 1/ITSN1. Interacts with SNARE complex components, including SNAP25, STX1A, SYT1 and SYT2; this interaction may inhibit SNARE complex formation.

Its subcellular location is the cell membrane. The protein localises to the presynaptic cell membrane. It is found in the synapse. The protein resides in the cell projection. It localises to the axon. Its subcellular location is the cytoplasmic vesicle. The protein localises to the secretory vesicle. It is found in the synaptic vesicle membrane. The protein resides in the postsynaptic density membrane. It localises to the dendritic spine. Functionally, as a component of the outer core of AMPAR complex, may be involved in synaptic transmission in the central nervous system. In hippocampal neurons, in presynaptic terminals, plays an important role in the final steps of neurotransmitter release, possibly by regulating Ca(2+)-sensing. In the cerebellum, may inhibit SNARE complex formation and down-regulate short-term facilitation. The polypeptide is Proline-rich transmembrane protein 2 (PRRT2) (Pongo abelii (Sumatran orangutan)).